The following is a 423-amino-acid chain: Anthranilate 1,2-dioxygenase large subunit (423 aa).

The Rieske domain occupies 53–168; the sequence is WNFVALEAEI…VDSYRGLVFA (116 aa). The [2Fe-2S] cluster site is built by cysteine 95, histidine 97, cysteine 115, and histidine 118. Positions 223, 228, and 370 each coordinate Fe cation.

The protein belongs to the bacterial ring-hydroxylating dioxygenase alpha subunit family. As to quaternary structure, part of a multicomponent enzyme system composed of a reductase (AndAa), a ferredoxin (AndAb) and a two-subunit oxygenase component (AndAc and AndAd). Fe cation is required as a cofactor. It depends on [2Fe-2S] cluster as a cofactor.

The catalysed reaction is anthranilate + NADH + O2 + 3 H(+) = catechol + NH4(+) + CO2 + NAD(+). It carries out the reaction anthranilate + NADPH + O2 + 3 H(+) = catechol + NH4(+) + CO2 + NADP(+). Its pathway is aromatic compound metabolism; anthranilate degradation via hydroxylation; catechol from anthranilate: step 1/1. Oxygenase component of anthranilate dioxygenase multicomponent enzyme system which catalyzes the incorporation of both atoms of molecular oxygen into anthranilate to form catechol. Can also act on benzoate and salicylate but not on 2-chlorobenzoate or o-toluate. The protein is Anthranilate 1,2-dioxygenase large subunit of Burkholderia cepacia (Pseudomonas cepacia).